The sequence spans 375 residues: Growth/differentiation factor 8 (375 aa).

The N-terminal stretch at 1–23 (MQKLQLCVYIYLFMLIVAGPVDL) is a signal peptide. The propeptide occupies 24-266 (NENSEQKENV…VTDTPKRSRR (243 aa)). N71 carries N-linked (GlcNAc...) asparagine glycosylation. 4 disulfides stabilise this stretch: C272–C282, C281–C340, C309–C372, and C313–C374.

It belongs to the TGF-beta family. As to quaternary structure, homodimer; disulfide-linked. Interacts with WFIKKN2, leading to inhibit its activity. Interacts with FSTL3. Synthesized as large precursor molecule that undergoes proteolytic cleavage to generate an N-terminal propeptide and a disulfide linked C-terminal dimer, which is the biologically active molecule. The circulating form consists of a latent complex of the C-terminal dimer and other proteins, including its propeptide, which maintain the C-terminal dimer in a latent, inactive state. Ligand activation requires additional cleavage of the prodomain by a tolloid-like metalloproteinase.

The protein resides in the secreted. Functionally, acts specifically as a negative regulator of skeletal muscle growth. The sequence is that of Growth/differentiation factor 8 (MSTN) from Pan paniscus (Pygmy chimpanzee).